The chain runs to 205 residues: Large ribosomal subunit protein uL18 (205 aa).

This sequence belongs to the universal ribosomal protein uL18 family. As to quaternary structure, part of the 50S ribosomal subunit. Contacts the 5S and 23S rRNAs.

Its function is as follows. This is one of the proteins that bind and probably mediate the attachment of the 5S RNA into the large ribosomal subunit, where it forms part of the central protuberance. This is Large ribosomal subunit protein uL18 from Pyrobaculum arsenaticum (strain DSM 13514 / JCM 11321 / PZ6).